Here is a 401-residue protein sequence, read N- to C-terminus: MIAVLGIKRNTPIEIREKLTIKANKHDEYLDRLLKYLDGVIILATCNRTEIYFNVSFINEELLKKIFEIFNWNYSYRKYIFISEDKKACKHLFEVTCGFHSKILGEDQILGQVKTSYFKSLNAKALNLELQRLFQYAITCGKKFKSQSRLFEIPVSSASIVVNESINKDCKKFMVLGYGDVGRLTMKYLLAHNINEVYLAVRNKKIKDEIVDERVNVIDFEEKNKYINDMDCVISCTSAPHIVIKKQDINNIGDNILIYDLAVPRDVDDEINDIDRAQVYNIDNISYINDGNKKMRFDKMDSNKFILENYLNEYYEWKRLRSIAPFIEELKVTSKEIYDKRITTFKNKCKYRGDVDLANKMIKSTSDYYMNRAIEIMKEETLKGSEEECLRIIKSIFIAKK.

Substrate is bound by residues 45–48, S101, 106–108, and Q112; these read TCNR and EDQ. Residue C46 is the Nucleophile of the active site. 177–182 serves as a coordination point for NADP(+); sequence GYGDVG.

The protein belongs to the glutamyl-tRNA reductase family. Homodimer.

The catalysed reaction is (S)-4-amino-5-oxopentanoate + tRNA(Glu) + NADP(+) = L-glutamyl-tRNA(Glu) + NADPH + H(+). Its pathway is porphyrin-containing compound metabolism; protoporphyrin-IX biosynthesis; 5-aminolevulinate from L-glutamyl-tRNA(Glu): step 1/2. Functionally, catalyzes the NADPH-dependent reduction of glutamyl-tRNA(Glu) to glutamate 1-semialdehyde (GSA). This is Glutamyl-tRNA reductase from Clostridium botulinum (strain Alaska E43 / Type E3).